The chain runs to 310 residues: Pantothenate kinase (310 aa).

An ATP-binding site is contributed by 95-102; the sequence is GSVAVGKS.

The protein belongs to the prokaryotic pantothenate kinase family.

Its subcellular location is the cytoplasm. It carries out the reaction (R)-pantothenate + ATP = (R)-4'-phosphopantothenate + ADP + H(+). Its pathway is cofactor biosynthesis; coenzyme A biosynthesis; CoA from (R)-pantothenate: step 1/5. The chain is Pantothenate kinase from Rhodococcus opacus (strain B4).